The chain runs to 699 residues: D-(-)-3-hydroxybutyrate oligomer hydrolase (699 aa).

An N-terminal signal peptide occupies residues 1–33 (MTAIRGGSRRAPGLALALLGGVLLGACHGDENA). The active-site Charge relay system is the Ser-311.

Belongs to the D-(-)-3-hydroxybutyrate oligomer hydrolase family.

The protein localises to the secreted. It catalyses the reaction (3R)-hydroxybutanoate dimer + H2O = 2 (R)-3-hydroxybutanoate + H(+). Its pathway is lipid metabolism; butanoate metabolism. Functionally, participates in the degradation of poly-3-hydroxybutyrate (PHB). It works downstream of poly(3-hydroxybutyrate) depolymerase, hydrolyzing D(-)-3-hydroxybutyrate oligomers of various length (3HB-oligomers) into 3HB-monomers. The polypeptide is D-(-)-3-hydroxybutyrate oligomer hydrolase (Burkholderia mallei (strain SAVP1)).